Consider the following 515-residue polypeptide: 1-pyrroline-5-carboxylate dehydrogenase (515 aa).

Catalysis depends on residues Glu286 and Cys320.

It belongs to the aldehyde dehydrogenase family. RocA subfamily.

It catalyses the reaction L-glutamate 5-semialdehyde + NAD(+) + H2O = L-glutamate + NADH + 2 H(+). Its pathway is amino-acid degradation; L-proline degradation into L-glutamate; L-glutamate from L-proline: step 2/2. This chain is 1-pyrroline-5-carboxylate dehydrogenase, found in Oceanobacillus iheyensis (strain DSM 14371 / CIP 107618 / JCM 11309 / KCTC 3954 / HTE831).